Consider the following 249-residue polypeptide: Bacillaene synthase decarboxylase PksI (249 aa).

The active site involves H230.

Belongs to the enoyl-CoA hydratase/isomerase family. As to quaternary structure, homotrimer. Does not form a heterotrimeric complex with PksH.

Its subcellular location is the cytoplasm. The protein operates within antibiotic biosynthesis; bacillaene biosynthesis. Its function is as follows. Involved in some intermediate steps for the synthesis of the antibiotic polyketide bacillaene which is involved in secondary metabolism. Catalyzes the decarboxylation of the 3-methylglutaconyl group tethered to PksL to a 3-methylcrotonyl moiety. The chain is Bacillaene synthase decarboxylase PksI (pksI) from Bacillus subtilis (strain 168).